A 354-amino-acid chain; its full sequence is Zinc finger protein-like 1 homolog (354 aa).

A B box-type; degenerate zinc finger spans residues 1-41 (MGICKCKKRSEDFCFNHKKFICDSCVVADHSICYIKSYVSW). An RING-type; atypical zinc finger spans residues 52 to 103 (CGVCKGKFDVDDNDDSVRLLCYHLYHPECIDVYVAALPQNSSVESYPCPKCP). Disordered stretches follow at residues 139–167 (KQNSNSNNNNNDNNNPKSNGITNGINGTH) and 187–225 (GIHHHHHHSNNSNNNNIINPSLLEETPPLSHLNSNPYGL). The span at 196 to 205 (NNSNNNNIIN) shows a compositional bias: low complexity. The helical transmembrane segment at 287–307 (YLIMITVAIIVFLILISKMGS) threads the bilayer. The segment at 326 to 354 (ININNDNNGGNGAINEETLNDQKIPNNGQ) is disordered.

Belongs to the ZFPL1 family.

The protein resides in the membrane. This chain is Zinc finger protein-like 1 homolog (zfpl1), found in Dictyostelium discoideum (Social amoeba).